Reading from the N-terminus, the 150-residue chain is 3-dehydroquinate dehydratase (150 aa).

Tyrosine 26 serves as the catalytic Proton acceptor. Asparagine 77, histidine 83, and aspartate 90 together coordinate substrate. Histidine 103 acts as the Proton donor in catalysis. Substrate-binding positions include 104-105 and arginine 114; that span reads LS.

Belongs to the type-II 3-dehydroquinase family. Homododecamer.

It catalyses the reaction 3-dehydroquinate = 3-dehydroshikimate + H2O. It participates in metabolic intermediate biosynthesis; chorismate biosynthesis; chorismate from D-erythrose 4-phosphate and phosphoenolpyruvate: step 3/7. Functionally, catalyzes a trans-dehydration via an enolate intermediate. This is 3-dehydroquinate dehydratase from Histophilus somni (strain 129Pt) (Haemophilus somnus).